A 351-amino-acid chain; its full sequence is Translation initiation factor eIF2B subunit beta (351 aa).

Belongs to the eIF-2B alpha/beta/delta subunits family. In terms of assembly, component of the translation initiation factor 2B (eIF2B) complex which is a heterodecamer of two sets of five different subunits: alpha, beta, gamma, delta and epsilon. Subunits alpha, beta and delta comprise a regulatory subcomplex and subunits epsilon and gamma comprise a catalytic subcomplex. Within the complex, the hexameric regulatory complex resides at the center, with the two heterodimeric catalytic subcomplexes bound on opposite sides.

It is found in the cytoplasm. The protein localises to the cytosol. Activated by the chemical integrated stress response (ISR) inhibitor ISRIB which stimulates guanine nucleotide exchange factor activity for both phosphorylated and unphosphorylated eIF2. Functionally, acts as a component of the translation initiation factor 2B (eIF2B) complex, which catalyzes the exchange of GDP for GTP on eukaryotic initiation factor 2 (eIF2) gamma subunit. Its guanine nucleotide exchange factor activity is repressed when bound to eIF2 complex phosphorylated on the alpha subunit, thereby limiting the amount of methionyl-initiator methionine tRNA available to the ribosome and consequently global translation is repressed. This chain is Translation initiation factor eIF2B subunit beta (EIF2B2), found in Oryctolagus cuniculus (Rabbit).